The primary structure comprises 761 residues: Cyclin-D-binding Myb-like transcription factor 1 (761 aa).

An interaction with CCND2 region spans residues 1 to 237 (MSTVEEDSDT…TPEEIEKLKE (237 aa)). The interval 24-51 (DTDGNLILHCPQNDPDEVDSEDSTEPPH) is disordered. Positions 37–47 (DPDEVDSEDST) are enriched in acidic residues. Residues 87–170 (VTMTATTEVA…IDILMNNIER (84 aa)) are required for transcriptional activation. The required for DNA-binding stretch occupies residues 87-458 (VTMTATTEVA…DNTAISPSPM (372 aa)). The interval 176–761 (GIKDATEIIF…KDVEDLVNCH (586 aa)) is interaction with CCND1, CCND2 and CCND3. The region spanning 225–263 (GKYTPEEIEKLKELRIKHGNDWATIGAALGRSASSVKDR) is the Myb-like 1 domain. An HTH myb-type domain is found at 268–333 (KDTCNTGKWT…KWLNYLNWKQ (66 aa)). A DNA-binding region (H-T-H motif) is located at residues 306–329 (WAAVAERVGTRSEKQCRSKWLNYL). Positions 339-388 (WTKEDEINLILRIAELDVADENDINWDLLAEGWSSVRSPQWLRSKWWTIK) constitute a Myb-like 2 domain. Residues 459 to 761 (AALQIPVQIT…KDVEDLVNCH (303 aa)) form a required for transcriptional activation region. Disordered stretches follow at residues 584–625 (SLSQ…MTIQ) and 740–761 (GSSLGSPVSEDSKDVEDLVNCH).

The protein belongs to the DMTF1 family. Interacts with the D-type cyclins CCND1, CCND2 and CCND3. Interaction with D-type cyclins may modulate transcriptional activation by this protein. Phosphorylated by the cyclin-D2/CDK4, cyclin-D3/CDK4 and cyclin-D2/CDK6 complexes and to a lesser extent by the cyclin-D1/CDK4 complex. As to expression, ubiquitously expressed (at mRNA level). Expressed in brain, intestine, kidney, lung, pancreas, skin, spleen and tongue (at protein level). Expressed at high levels in testis and thymus (at protein level). In all tissues examined, expression is predominant in non-proliferating and differentiated cell types. These include epithelial, interstitial and smooth muscle cells of the intestine, differentiated spermatids, sperm and interstitial cells of the testis, and lymphoid cells of the medullary compartment of the thymus.

Its subcellular location is the nucleus. In terms of biological role, transcriptional activator which activates the CDKN2A/ARF locus in response to Ras-Raf signaling, thereby promoting p53/TP53-dependent growth arrest. May also cooperate with MYB to activate transcription of the ANPEP gene. Binds to the consensus sequence 5'-CCCG[GT]ATGT-3'. In Mus musculus (Mouse), this protein is Cyclin-D-binding Myb-like transcription factor 1 (Dmtf1).